Reading from the N-terminus, the 96-residue chain is MNTIVKHTVGFIASIVLTLLAVFVTLYTNMTFHAKVTIIFGFAFIQAALQLLMFMHLTEGKDGRLQSFKVIFAIIITLVTVIGTYWVMQGGHSSHL.

The next 3 helical transmembrane spans lie at 8 to 28 (TVGFIASIVLTLLAVFVTLYT), 36 to 56 (VTIIFGFAFIQAALQLLMFMH), and 68 to 88 (FKVIFAIIITLVTVIGTYWVM).

It belongs to the cytochrome c oxidase bacterial subunit 4 family.

The protein resides in the cell membrane. The enzyme catalyses 2 a quinol + O2 = 2 a quinone + 2 H2O. Functionally, catalyzes quinol oxidation with the concomitant reduction of oxygen to water. This is Probable quinol oxidase subunit 4 (qoxD) from Staphylococcus epidermidis (strain ATCC 35984 / DSM 28319 / BCRC 17069 / CCUG 31568 / BM 3577 / RP62A).